The chain runs to 119 residues: MILGIGIDIIELNRIEKMINGKLNFIERILTETERDVAAKLKGKRLVEFVAGRFAAKEAYSKAVGTGIGKEVSFLDIEIKNDQKGKPVLFTNTEYIVHLSISHSREFAVAQVVLESPSC.

Residues aspartate 8 and glutamate 58 each coordinate Mg(2+).

This sequence belongs to the P-Pant transferase superfamily. AcpS family. It depends on Mg(2+) as a cofactor.

The protein resides in the cytoplasm. The enzyme catalyses apo-[ACP] + CoA = holo-[ACP] + adenosine 3',5'-bisphosphate + H(+). In terms of biological role, transfers the 4'-phosphopantetheine moiety from coenzyme A to a Ser of acyl-carrier-protein. The sequence is that of Holo-[acyl-carrier-protein] synthase from Bacillus cytotoxicus (strain DSM 22905 / CIP 110041 / 391-98 / NVH 391-98).